Consider the following 591-residue polypeptide: V-type ATP synthase alpha chain (591 aa).

233–240 (GPFGAGKT) contributes to the ATP binding site.

Belongs to the ATPase alpha/beta chains family.

The catalysed reaction is ATP + H2O + 4 H(+)(in) = ADP + phosphate + 5 H(+)(out). Its function is as follows. Produces ATP from ADP in the presence of a proton gradient across the membrane. The V-type alpha chain is a catalytic subunit. The polypeptide is V-type ATP synthase alpha chain (Streptococcus pyogenes serotype M49 (strain NZ131)).